The sequence spans 259 residues: MIDKKKVNRNFSKGAKTYDEYALIQRHMADKLGIFIEDSEEVFNILEIGCGTGIFSEKILNKFPNSNIDFLDISHDMIKNVKDKIGSKENLNFIVEDIEKYQPQKKYDLIFSNATFQWIQNKKGLFDHLDSFLKPGGLILFSTFGKDTYFELRESLKSIDPDLEYSQNFISLEDLKKVLDDKYKILAAEEERIKENYHCVMDFLKMIKGIGANSALSNSKPFTRDKFNRLEDEYRKNYCSGDSIEVTNHLIYMILGKNY.

Belongs to the methyltransferase superfamily.

The catalysed reaction is malonyl-[ACP] + S-adenosyl-L-methionine = malonyl-[ACP] methyl ester + S-adenosyl-L-homocysteine. The protein operates within cofactor biosynthesis; biotin biosynthesis. Functionally, converts the free carboxyl group of a malonyl-thioester to its methyl ester by transfer of a methyl group from S-adenosyl-L-methionine (SAM). It allows to synthesize pimeloyl-ACP via the fatty acid synthetic pathway. The protein is Malonyl-[acyl-carrier protein] O-methyltransferase 2 of Ilyobacter polytropus (strain ATCC 51220 / DSM 2926 / LMG 16218 / CuHBu1).